The primary structure comprises 263 residues: Small ribosomal subunit protein eS4 (263 aa).

The S4 RNA-binding domain maps to 42 to 104 (LPLIVFLRNR…TGEHFRLVYD (63 aa)).

Belongs to the eukaryotic ribosomal protein eS4 family.

In Pongo pygmaeus (Bornean orangutan), this protein is Small ribosomal subunit protein eS4 (RPS4Y1).